The primary structure comprises 558 residues: uncharacterized protein (558 aa).

Positions 396 to 420 are disordered; it reads SSITDNDTDNDSGATESQQTDSEND. The span at 407–416 shows a compositional bias: polar residues; sequence SGATESQQTD.

It belongs to the chlamydial CPn_0065/CT_288/TC_0561 family.

This is an uncharacterized protein from Chlamydia muridarum (strain MoPn / Nigg).